A 542-amino-acid chain; its full sequence is Adenine deaminase (542 aa).

This sequence belongs to the metallo-dependent hydrolases superfamily. Adenine deaminase family. Requires Mn(2+) as cofactor.

The catalysed reaction is adenine + H2O + H(+) = hypoxanthine + NH4(+). This chain is Adenine deaminase, found in Methanosphaera stadtmanae (strain ATCC 43021 / DSM 3091 / JCM 11832 / MCB-3).